Reading from the N-terminus, the 472-residue chain is L-fuculokinase (472 aa).

It belongs to the FGGY kinase family. The cofactor is a divalent metal cation.

The catalysed reaction is L-fuculose + ATP = L-fuculose 1-phosphate + ADP + H(+). Its pathway is carbohydrate degradation; L-fucose degradation; L-lactaldehyde and glycerone phosphate from L-fucose: step 2/3. Functionally, catalyzes the phosphorylation of L-fuculose. This is L-fuculokinase from Salmonella typhi.